The chain runs to 274 residues: Thiamine kinase (274 aa).

It belongs to the thiamine kinase family.

It carries out the reaction thiamine + ATP = thiamine phosphate + ADP + H(+). Its pathway is cofactor biosynthesis; thiamine diphosphate biosynthesis; thiamine phosphate from thiamine: step 1/1. Its function is as follows. Catalyzes the ATP-dependent phosphorylation of thiamine to thiamine phosphate. Is involved in thiamine salvage. In Salmonella paratyphi A (strain ATCC 9150 / SARB42), this protein is Thiamine kinase.